Consider the following 316-residue polypeptide: Pantothenate kinase (316 aa).

95–102 provides a ligand contact to ATP; it reads GSVAVGKS.

It belongs to the prokaryotic pantothenate kinase family.

The protein localises to the cytoplasm. The enzyme catalyses (R)-pantothenate + ATP = (R)-4'-phosphopantothenate + ADP + H(+). It functions in the pathway cofactor biosynthesis; coenzyme A biosynthesis; CoA from (R)-pantothenate: step 1/5. This is Pantothenate kinase from Shewanella woodyi (strain ATCC 51908 / MS32).